The primary structure comprises 503 residues: Structure-specific endonuclease subunit EME2 (503 aa).

Composition is skewed to basic and acidic residues over residues 1-10, 38-48, and 112-135; these read METKQERETG, ETNKPQTESRK, and AEEK…LEKI. Residues 1-135 are disordered; the sequence is METKQERETG…KAQKKELEKI (135 aa). Residues 70-366 form a nuclease-like domain; forms the post-nick DNA binding interface and is involved in DNA recognition and bending region; it reads QPDVEEKTKN…RPFRKHWEAQ (297 aa). The stretch at 103-151 forms a coiled coil; that stretch reads EQVAAEQEQAEEKKRQRELKRQEKAQKKELEKIERERRKETNLALKLLR. The segment at 388 to 503 is helix-hairpin-helix (2HhH); forms the pre-nick DNA binding interface and is involved in DNA recognition and bending; the sequence is GLPLTWRRQI…NPELVLDLNS (116 aa).

It belongs to the EME1/MMS4 family. As to quaternary structure, part of the heterodimeric MUS81-EME2 complex; the complex forms specifically during the DNA replication phase of the cell cycle.

The protein resides in the nucleus. Non-catalytic subunit of the structure-specific, heterodimeric DNA endonuclease MUS81-EME2 which is involved in the maintenance of genome stability. In the complex, EME2 is required for DNA cleavage, participating in DNA recognition and bending. MUS81-EME2 cleaves 3'-flaps and nicked Holliday junctions, and exhibit limited endonuclease activity with 5' flaps and nicked double-stranded DNAs. MUS81-EME2 which is active during the replication of DNA is more specifically involved in replication fork processing. Replication forks frequently encounter obstacles to their passage, including DNA base lesions, DNA interstrand cross-links, difficult-to-replicate sequences, transcription bubbles, or tightly bound proteins. One mechanism for the restart of a stalled replication fork involves nucleolytic cleavage mediated by the MUS81-EME2 endonuclease. By acting upon the stalled fork, MUS81-EME2 generates a DNA double-strand break (DSB) that can be repaired by homologous recombination, leading to the restoration of an active fork. MUS81-EME2 could also function in telomere maintenance. The sequence is that of Structure-specific endonuclease subunit EME2 (eme2) from Xenopus tropicalis (Western clawed frog).